The chain runs to 423 residues: Growth hormone-releasing hormone receptor (423 aa).

The N-terminal stretch at 1–22 (MDGLMWATRILCLLSLCGVTLG) is a signal peptide. At 23 to 130 (HLHLECDFIT…KEKSYFSTVK (108 aa)) the chain is on the extracellular side. 3 disulfides stabilise this stretch: Cys-41-Cys-64, Cys-55-Cys-96, and Cys-78-Cys-112. Residues Asn-49 and Asn-50 are each glycosylated (N-linked (GlcNAc...) asparagine). A helical membrane pass occupies residues 131 to 151 (IIYTTGHSISIVALCVAIAIL). The Cytoplasmic portion of the chain corresponds to 152-167 (VALRRLHCPRNYIHTQ). The chain crosses the membrane as a helical span at residues 168–188 (LFATFILKASAVFLKDAAIFQ). At 189–210 (GDSTDHCSMSTVLCKVSVAISH) the chain is on the extracellular side. The chain crosses the membrane as a helical span at residues 211 to 231 (LATMTNFSWLLAEAVYLSCLL). Residues 232–240 (ASTSPRSKP) are Cytoplasmic-facing. A helical transmembrane segment spans residues 241–261 (AFWWLVLAGWGLPVLCTGTWV). Topologically, residues 262–283 (GCKLAFEDTECWDLDNSSPCWW) are extracellular. Residues 284 to 304 (IIKGPIVLSVGVNFGLFLNII) traverse the membrane as a helical segment. Residues 305–331 (CILLRKLEPAQGGLHTRAQYWRLSKST) lie on the Cytoplasmic side of the membrane. The helical transmembrane segment at 332–352 (LLLIPLFGIHYIIFNFLPDSA) threads the bilayer. Over 353–357 (GLDIR) the chain is Extracellular. Residues 358 to 378 (VPLELGLGSFQGFIVAVLYCF) form a helical membrane-spanning segment. At 379–423 (LNQEVRTEISRKWYGHDPELLPARRTCTEWTTPPRSRLKVLTSEC) the chain is on the cytoplasmic side.

Belongs to the G-protein coupled receptor 2 family. In terms of tissue distribution, pituitary gland.

The protein resides in the cell membrane. Receptor for GRF, coupled to G proteins which activate adenylyl cyclase. Stimulates somatotroph cell growth, growth hormone gene transcription and growth hormone secretion. In Mus musculus (Mouse), this protein is Growth hormone-releasing hormone receptor (Ghrhr).